A 2292-amino-acid polypeptide reads, in one-letter code: Protein Ycf2 (2292 aa).

Residue 1644-1651 (GSIGTGRS) participates in ATP binding.

The protein belongs to the Ycf2 family.

The protein resides in the plastid. It localises to the chloroplast stroma. Probable ATPase of unknown function. Its presence in a non-photosynthetic plant (Epifagus virginiana) and experiments in tobacco indicate that it has an essential function which is probably not related to photosynthesis. The protein is Protein Ycf2 of Morus indica (Mulberry).